Consider the following 1024-residue polypeptide: MTMITDSLAVVLQRRDWENPGVTQLNRLAAHPHFASWRNSEEARTDRPSQQLRSLNGEWRFAWFPAPEAVPESWLDCDLPDADTVVVPSNWQMHGYDAPIYTNVTYPITVNPPFVPAENPTGCYSLTFNIDECWLQKGQTRIIFDGVNSAFHLWCNGRWVGYGQDSRLPSEFDLSAFLRAGKNRLAVMVLRWSDGSYLEDQDMWRMSGIFRDVSLLHKPTTQISDFHVATRFNDDFSRAVLEAEVQMCGELRDELRVTVSLWQGETQVASGTTPFGGEIIDERGGYADRVTLRLNVENPALWSAEIPNLYRAVVELHTADGTLIEAEACDVGFREVRIENGLLLLNGKPVLIRGVNRHEHHPLHGQVMDEQTMVQDILLMKQNNFNAVRCSHYPNHPLWYTLCDRYGLYVVDEANIETHGMVPMNRLTDDPRWLPAMSERVTRMVQRDRNHPSVIIWSLGNESGHGANHDALYRWIKSVDPSRPVQYEGGGADTTATDIICPMYARVDEDQPFPAVPKWSIKKWLSLPGELRPLILCEYAHAMGNSLGGFAKYWQAFRQYPRLQGGFVWDWVDQSLIKYDENGNPWSAYGGDFGDTPNDRQFCMNGLVFADRTPHPALTEAKHQQQFFQFRLSGRTIEVTSEYLFRHSDNELLHWSVALDGKPLASGEMPLDVAPQDKQLIELPELPQPESTGQLWLTVHVVQPNATAWSEAGHISAWQQWRLAENLSVALPSAPHAIPQLTTSEMDFCIELGNKRWQFNRQSGFLSQMWIGDEKQLLTPLRDQFIRAPLDNDIGVSEATRIDPNAWVERWKAAGHYQAEVALLQCTADILADAVLITTAHAWQHQGKTLFISRKTYRIDGSGQMAITVDVEVASDTPHPARIGLTCQLAQVAERVNWLGLGPQENYPDRLTAACFDRWDLPLSDMYTPYVFPSENGLRCGTRELNYGPHQWRGDFQFNISRYSQQQLMETSHRHLLHAEEGTWLNIDGFHMGIGGDDSWSPSVSAEFQLSAGRYHYQLVWCQK.

Asn103 and Asp202 together coordinate substrate. Asp202 contacts Na(+). Glu417, His419, and Glu462 together coordinate Mg(2+). Substrate-binding positions include Glu462 and 538 to 541; that span reads EYAH. Glu462 acts as the Proton donor in catalysis. Glu538 acts as the Nucleophile in catalysis. Asn598 is a binding site for Mg(2+). Residues Phe602 and Asn605 each coordinate Na(+). Asn605 and Trp1000 together coordinate substrate.

The protein belongs to the glycosyl hydrolase 2 family. Homotetramer. Mg(2+) is required as a cofactor. It depends on Na(+) as a cofactor.

The enzyme catalyses Hydrolysis of terminal non-reducing beta-D-galactose residues in beta-D-galactosides.. The sequence is that of Beta-galactosidase from Escherichia coli (strain SMS-3-5 / SECEC).